The chain runs to 309 residues: Pyridoxal 5'-phosphate synthase subunit PDX1.1 (309 aa).

Met1 carries the post-translational modification N-acetylmethionine. Asp41 contributes to the D-ribose 5-phosphate binding site. Catalysis depends on Lys98, which acts as the Schiff-base intermediate with D-ribose 5-phosphate. D-ribose 5-phosphate is bound at residue Gly170. Arg182 is a D-glyceraldehyde 3-phosphate binding site. D-ribose 5-phosphate-binding positions include Gly231 and Gly252–Ser253.

It belongs to the PdxS/SNZ family. As to quaternary structure, homodimer or heterodimer with PDX1.2 or PDX1.3. Interacts with PDX2. As to expression, expressed in flowers, shoots, leaves and weakly in roots.

Its subcellular location is the cytoplasm. It catalyses the reaction aldehydo-D-ribose 5-phosphate + D-glyceraldehyde 3-phosphate + L-glutamine = pyridoxal 5'-phosphate + L-glutamate + phosphate + 3 H2O + H(+). It participates in cofactor biosynthesis; pyridoxal 5'-phosphate biosynthesis. Catalyzes the formation of pyridoxal 5'-phosphate from ribose 5-phosphate (RBP), glyceraldehyde 3-phosphate (G3P) and ammonia. The ammonia is provided by PDX2. Can also use ribulose 5-phosphate and dihydroxyacetone phosphate as substrates, resulting from enzyme-catalyzed isomerization of RBP and G3P, respectively. Also plays an indirect role in resistance to singlet oxygen-generating photosensitizers. The protein is Pyridoxal 5'-phosphate synthase subunit PDX1.1 (PDX11) of Arabidopsis thaliana (Mouse-ear cress).